Reading from the N-terminus, the 248-residue chain is Cyclo(L-leucyl-L-leucyl) synthase (248 aa).

Catalysis depends on serine 37, which acts as the Nucleophile. Residues asparagine 40, 180–184 (YVIAE), tyrosine 204, and 209–210 (KL) each bind substrate.

The protein belongs to the CDPS family. As to quaternary structure, monomer.

The enzyme catalyses 2 L-leucyl-tRNA(Leu) = cyclo(L-leucyl-L-leucyl) + 2 tRNA(Leu) + 2 H(+). Involved in the biosynthesis of pulcherrimin, a red extracellular pigment. It uses activated amino acids in the form of aminoacyl-tRNAs (aa-tRNAs) as substrates to catalyze the ATP-independent formation of cyclodipeptides which are intermediates in diketopiperazine (DKP) biosynthetic pathways. Catalyzes the formation of cyclo(L-Leu-L-Leu) (cLL) from L-leucyl-tRNA(Leu). Can also incorporate various nonpolar residues, such as L-phenylalanine, L-leucine and methionine, into cyclodipeptides. This chain is Cyclo(L-leucyl-L-leucyl) synthase (yvmC), found in Bacillus subtilis (strain 168).